The following is a 114-amino-acid chain: uncharacterized protein (114 aa).

The chain crosses the membrane as a helical span at residues 7–27; the sequence is YIFSFWFFFLVEYVVTFRLFL. Positions 90–114 are disordered; sequence KNSPEKKKFKRGLPISSKYTDGKKR.

The protein resides in the membrane. This is an uncharacterized protein from Saccharomyces cerevisiae (strain ATCC 204508 / S288c) (Baker's yeast).